A 77-amino-acid polypeptide reads, in one-letter code: Pi-stichotoxin-Hmg5a (77 aa).

A signal peptide spans 1 to 21 (MDYQRLLFLFAVAMVITTTVA). The propeptide occupies 22–34 (LPQDTALMDGQLQ). 3 cysteine pairs are disulfide-bonded: Cys-40-Cys-73, Cys-42-Cys-66, and Cys-56-Cys-74.

The protein belongs to the sea anemone type 3 (BDS) potassium channel toxin family.

It localises to the secreted. Its subcellular location is the nematocyst. Its function is as follows. Toxin that inhibits rat ASIC3 channels (IC(50)=13.8 uM). Also able to bind T.californica muscle-type nicotinic acetylcholine receptors (nAChR), and human alpha-7/CHRNA7 nicotinic acetylcholine receptors. The protein is Pi-stichotoxin-Hmg5a of Heteractis magnifica (Magnificent sea anemone).